A 314-amino-acid chain; its full sequence is Mitochondrial 2-oxoglutarate/malate carrier protein (314 aa).

Alanine 2 carries the N-acetylalanine modification. Serine 6 carries the phosphoserine modification. 3 Solcar repeats span residues 23–108 (VKFL…LFER), 117–208 (PGFL…SKQF), and 217–306 (DNIL…MNKA). A helical transmembrane segment spans residues 24-42 (KFLFGGLAGMGATVFVQPL). An N6-succinyllysine modification is found at lysine 57. N6-acetyllysine is present on lysine 73. A helical membrane pass occupies residues 83–101 (GLSAGLLRQATYTTTRLGI). Tyrosine 102 bears the Phosphotyrosine mark. 3 consecutive transmembrane segments (helical) span residues 119–140 (FLLK…GTPA), 183–202 (GCIP…LASY), and 222–240 (HFCA…SMPV). Lysine 256 is modified (N6-acetyllysine). Residues 281–300 (GFTPYYARLGPHTVLTFIFL) traverse the membrane as a helical segment.

This sequence belongs to the mitochondrial carrier (TC 2.A.29) family. Interacts with SMIM26. In terms of tissue distribution, most highly expressed in the heart.

The protein resides in the mitochondrion inner membrane. The enzyme catalyses (S)-malate(in) + 2-oxoglutarate(out) = (S)-malate(out) + 2-oxoglutarate(in). The catalysed reaction is malonate(in) + 2-oxoglutarate(out) = malonate(out) + 2-oxoglutarate(in). It catalyses the reaction succinate(in) + 2-oxoglutarate(out) = succinate(out) + 2-oxoglutarate(in). It carries out the reaction maleate(in) + 2-oxoglutarate(out) = maleate(out) + 2-oxoglutarate(in). The enzyme catalyses oxaloacetate(in) + 2-oxoglutarate(out) = oxaloacetate(out) + 2-oxoglutarate(in). In terms of biological role, catalyzes the transport of 2-oxoglutarate (alpha-oxoglutarate) across the inner mitochondrial membrane in an electroneutral exchange for malate. Can also exchange 2-oxoglutarate for other dicarboxylic acids such as malonate, succinate, maleate and oxaloacetate, although with lower affinity. Contributes to several metabolic processes, including the malate-aspartate shuttle, the oxoglutarate/isocitrate shuttle, in gluconeogenesis from lactate, and in nitrogen metabolism. Maintains mitochondrial fusion and fission events, and the organization and morphology of cristae. Involved in the regulation of apoptosis. Helps protect from cytotoxic-induced apoptosis by modulating glutathione levels in mitochondria. This is Mitochondrial 2-oxoglutarate/malate carrier protein (SLC25A11) from Homo sapiens (Human).